We begin with the raw amino-acid sequence, 43 residues long: Metallothionein-2 (43 aa).

Methionine 1 carries the blocked amino end (Met) modification.

It belongs to the metallothionein superfamily. Type 5 family.

This protein binds cations of several transition elements. Thought to be involved in metal ion homeostasis. The sequence is that of Metallothionein-2 (MtnB) from Drosophila melanogaster (Fruit fly).